The following is a 203-amino-acid chain: Glycerol-3-phosphate acyltransferase (203 aa).

The next 5 membrane-spanning stretches (helical) occupy residues 2–22 (LATL…AILV), 54–74 (CLVL…AYFL), 80–100 (ALGL…FFGF), 114–134 (LPIG…MVAI), and 153–173 (TWLI…LIIF).

This sequence belongs to the PlsY family. As to quaternary structure, probably interacts with PlsX.

The protein resides in the cell inner membrane. The catalysed reaction is an acyl phosphate + sn-glycerol 3-phosphate = a 1-acyl-sn-glycero-3-phosphate + phosphate. The protein operates within lipid metabolism; phospholipid metabolism. Its function is as follows. Catalyzes the transfer of an acyl group from acyl-phosphate (acyl-PO(4)) to glycerol-3-phosphate (G3P) to form lysophosphatidic acid (LPA). This enzyme utilizes acyl-phosphate as fatty acyl donor, but not acyl-CoA or acyl-ACP. The polypeptide is Glycerol-3-phosphate acyltransferase (Pseudoalteromonas translucida (strain TAC 125)).